Consider the following 557-residue polypeptide: MAAQGFLLIATFLLVLMVLARPLGSGLARLINDIPLPGTAGVERILFRLPGVSDHEMNWKQYLCAILGLNMLGLAVLFFMLLGQHYLPLNPQQLPGLSWDLALNTAVSFVTNTNWQSYSGETTLSYFSQMAGLTVQNFLSAASGIAVIFAFIRAFTRQSMSTLGNAWVDLLRITLWVLVPVALLIALFFIQQGAQQNFLPYQAVNTVEGAQQLLPMGPVASQEAIKMLGTNGGGFFNANSSHPFENPTALTNFVQMLAIFLIPTALCFAFGEVTGDRRQGRMLLWAMSVIFVICVGVVMWAEVQGNPHLLALGADSSINMEGKESRFGVLVSSLFAVVTTAASCGAVIAMHDSFTALGGMVPMWLMQIGEVVFGGVGSGLYGMMLFVLLAVFIAGLMIGRTPEYLGKKIDVREMKLTALAILVTPTLVLMGAALAMMTDAGRSAMLNPSPHGFSEVLYAVSSAANNNGSAFAGLSANSPFWNCLLAFCMFVGRFGVIIPVMAIAGSLVSKKSQPASSGTLPTHGPLFVGLLIGTVLLVGALTFIPALALGPVAEYLS.

A run of 12 helical transmembrane segments spans residues 5-25 (GFLLIATFLLVLMVLARPLGS), 63-83 (LCAILGLNMLGLAVLFFMLLG), 132-152 (GLTVQNFLSAASGIAVIFAFI), 170-190 (LLRITLWVLVPVALLIALFFI), 253-273 (FVQMLAIFLIPTALCFAFGEV), 283-303 (LLWAMSVIFVICVGVVMWAEV), 329-349 (VLVSSLFAVVTTAASCGAVIA), 356-376 (ALGGMVPMWLMQIGEVVFGGV), 379-399 (GLYGMMLFVLLAVFIAGLMIG), 416-436 (LTALAILVTPTLVLMGAALAM), 484-504 (LLAFCMFVGRFGVIIPVMAIA), and 526-546 (LFVGLLIGTVLLVGALTFIPA).

This sequence belongs to the KdpA family. In terms of assembly, the system is composed of three essential subunits: KdpA, KdpB and KdpC.

The protein resides in the cell inner membrane. Part of the high-affinity ATP-driven potassium transport (or Kdp) system, which catalyzes the hydrolysis of ATP coupled with the electrogenic transport of potassium into the cytoplasm. This subunit binds the periplasmic potassium ions and delivers the ions to the membrane domain of KdpB through an intramembrane tunnel. This chain is Potassium-transporting ATPase potassium-binding subunit, found in Shigella flexneri.